An 879-amino-acid polypeptide reads, in one-letter code: Aminopeptidase M1 (879 aa).

Residues 98-205 form a required for membrane association region; sequence HGVGVLKLGF…MSTYLVAIVV (108 aa). Residues glutamate 138 and 271–275 contribute to the substrate site; that span reads GAMEN. Residue histidine 307 coordinates Zn(2+). Glutamate 308 serves as the catalytic Proton acceptor. 2 residues coordinate Zn(2+): histidine 311 and glutamate 330. Positions 728-729 match the Dileucine internalization motif motif; it reads LL.

The protein belongs to the peptidase M1 family. In terms of assembly, homodimer. Interacts with N-1-naphthylphthalamic acid (NPA). It depends on Zn(2+) as a cofactor. Ubiquitous with preferential expression in 5 days-old seedlings, roots, young flowers, upper inflorescence stems, and rosette leaves.

Its subcellular location is the membrane. The protein localises to the microsome membrane. The protein resides in the cytoplasm. It carries out the reaction Release of an N-terminal amino acid, Xaa-|-Yaa- from a peptide, amide or arylamide. Xaa is preferably Ala, but may be most amino acids including Pro (slow action). When a terminal hydrophobic residue is followed by a prolyl residue, the two may be released as an intact Xaa-Pro dipeptide.. Functionally, metallopeptidase that binds to the auxin transport inhibitor N-1-naphthylphthalamic acid (NPA). Required for embryonic and seedling development as well as cell cycle progression. Homodimerization is required to proper localization and activity. May play a negative role in the regulation of PIN auxin transport proteins. This Arabidopsis thaliana (Mouse-ear cress) protein is Aminopeptidase M1 (APM1).